Here is a 383-residue protein sequence, read N- to C-terminus: Na(+)/H(+) antiporter NhaA (383 aa).

Transmembrane regions (helical) follow at residues Ala14–Leu34, Phe47–Ile67, Ile87–Phe107, Gly117–Gly137, Val146–Phe166, Leu171–Ala191, Ala205–Ile225, Val252–Val272, Met280–Phe300, Ile321–Leu341, and Leu356–Ser376.

Belongs to the NhaA Na(+)/H(+) (TC 2.A.33) antiporter family.

The protein localises to the cell inner membrane. The catalysed reaction is Na(+)(in) + 2 H(+)(out) = Na(+)(out) + 2 H(+)(in). Na(+)/H(+) antiporter that extrudes sodium in exchange for external protons. In Vibrio alginolyticus, this protein is Na(+)/H(+) antiporter NhaA.